A 2238-amino-acid chain; its full sequence is Protein Ycf2 (2238 aa).

1579 to 1586 contributes to the ATP binding site; sequence GSIGTGRS.

Belongs to the Ycf2 family.

The protein localises to the plastid. Functionally, probable ATPase of unknown function. Its presence in a non-photosynthetic plant (Epifagus virginiana) and experiments in tobacco indicate that it has an essential function which is probably not related to photosynthesis. The polypeptide is Protein Ycf2 (Cuscuta exaltata (Tall dodder)).